Reading from the N-terminus, the 243-residue chain is Peptide deformylase, mitochondrial (243 aa).

The N-terminal 39 residues, 1–39 (MARLWGALSLWPLWAAVPWGGAAAVGVRACSSTAAPDGV), are a transit peptide targeting the mitochondrion. Positions 71, 169, and 171 each coordinate substrate. A hydrophobic dimerization interface region spans residues 165 to 175 (LVTFPEGCESV). Co(2+) is bound by residues C172 and H214. Residue E215 is part of the active site. H218 is a binding site for Co(2+).

This sequence belongs to the polypeptide deformylase family. In terms of assembly, homodimer. Co(2+) serves as cofactor. Ubiquitous.

It localises to the mitochondrion. The catalysed reaction is N-terminal N-formyl-L-methionyl-[peptide] + H2O = N-terminal L-methionyl-[peptide] + formate. Its function is as follows. Removes the formyl group from the N-terminal Met of newly synthesized proteins. In Homo sapiens (Human), this protein is Peptide deformylase, mitochondrial.